A 125-amino-acid polypeptide reads, in one-letter code: MERYLLVALGGALGSLLRYGLGALVQGSLGAGFPWSTLFVNALGSFLIGLTLRLSLEGALSGEARLFLAVGVLGGFTTFSSLSYETLALLQGGEVGKALLYAFGSLFLGLFLAFLGYRLGGALVG.

The next 4 membrane-spanning stretches (helical) occupy residues 5–25 (LLVA…GALV), 29–49 (LGAG…FLIG), 66–86 (LFLA…SYET), and 95–115 (VGKA…LAFL). Na(+) contacts are provided by glycine 74 and threonine 77.

The protein belongs to the fluoride channel Fluc/FEX (TC 1.A.43) family.

The protein resides in the cell inner membrane. It catalyses the reaction fluoride(in) = fluoride(out). With respect to regulation, na(+) is not transported, but it plays an essential structural role and its presence is essential for fluoride channel function. In terms of biological role, fluoride-specific ion channel. Important for reducing fluoride concentration in the cell, thus reducing its toxicity. The sequence is that of Fluoride-specific ion channel FluC from Thermus thermophilus (strain ATCC 27634 / DSM 579 / HB8).